The primary structure comprises 364 residues: NAD(P)H-quinone oxidoreductase subunit 1, chloroplastic (364 aa).

The next 6 membrane-spanning stretches (helical) occupy residues 27–47 (IWLL…VLVI), 98–118 (FSVG…VIPF), 127–147 (ISIG…GLLM), 255–275 (GLFY…VTVL), 301–321 (VFGS…FLFV), and 337–357 (LLNL…LLTT).

The protein belongs to the complex I subunit 1 family. As to quaternary structure, NDH is composed of at least 16 different subunits, 5 of which are encoded in the nucleus.

The protein resides in the plastid. It is found in the chloroplast thylakoid membrane. It catalyses the reaction a plastoquinone + NADH + (n+1) H(+)(in) = a plastoquinol + NAD(+) + n H(+)(out). It carries out the reaction a plastoquinone + NADPH + (n+1) H(+)(in) = a plastoquinol + NADP(+) + n H(+)(out). Its function is as follows. NDH shuttles electrons from NAD(P)H:plastoquinone, via FMN and iron-sulfur (Fe-S) centers, to quinones in the photosynthetic chain and possibly in a chloroplast respiratory chain. The immediate electron acceptor for the enzyme in this species is believed to be plastoquinone. Couples the redox reaction to proton translocation, and thus conserves the redox energy in a proton gradient. In Illicium oligandrum (Star anise), this protein is NAD(P)H-quinone oxidoreductase subunit 1, chloroplastic.